A 329-amino-acid chain; its full sequence is DNA-directed RNA polymerase subunit alpha (329 aa).

Residues M1–R235 form an alpha N-terminal domain (alpha-NTD) region. The alpha C-terminal domain (alpha-CTD) stretch occupies residues F249–D329.

This sequence belongs to the RNA polymerase alpha chain family. As to quaternary structure, homodimer. The RNAP catalytic core consists of 2 alpha, 1 beta, 1 beta' and 1 omega subunit. When a sigma factor is associated with the core the holoenzyme is formed, which can initiate transcription.

The catalysed reaction is RNA(n) + a ribonucleoside 5'-triphosphate = RNA(n+1) + diphosphate. Its function is as follows. DNA-dependent RNA polymerase catalyzes the transcription of DNA into RNA using the four ribonucleoside triphosphates as substrates. This is DNA-directed RNA polymerase subunit alpha from Actinobacillus pleuropneumoniae serotype 5b (strain L20).